A 968-amino-acid polypeptide reads, in one-letter code: RNA polymerase-associated protein RapA (968 aa).

In terms of domain architecture, Helicase ATP-binding spans 164–334; sequence DVGRRHAPRV…FARLRLLDPN (171 aa). 177-184 is an ATP binding site; that stretch reads DEVGLGKT. Positions 280–283 match the DEAH box motif; the sequence is DEAH. The 173-residue stretch at 490–662 folds into the Helicase C-terminal domain; sequence RVEWLMGYLT…YLASPDQTEG (173 aa).

The protein belongs to the SNF2/RAD54 helicase family. RapA subfamily. In terms of assembly, interacts with the RNAP. Has a higher affinity for the core RNAP than for the holoenzyme. Its ATPase activity is stimulated by binding to RNAP.

Its function is as follows. Transcription regulator that activates transcription by stimulating RNA polymerase (RNAP) recycling in case of stress conditions such as supercoiled DNA or high salt concentrations. Probably acts by releasing the RNAP, when it is trapped or immobilized on tightly supercoiled DNA. Does not activate transcription on linear DNA. Probably not involved in DNA repair. This Shigella flexneri serotype 5b (strain 8401) protein is RNA polymerase-associated protein RapA.